The primary structure comprises 98 residues: MSLVYMNIMTAFMVSLAGLLMYRSHLMSSLLCLEGMMLSLFVLATLTILNSHFTLASMMPIILLVFGACEAALGLSLLVMVSNTYGTDYVQNLNLLQC.

The next 3 membrane-spanning stretches (helical) occupy residues 1–21 (MSLV…GLLM), 29–49 (SLLC…LTIL), and 61–81 (IILL…LVMV).

It belongs to the complex I subunit 4L family. Core subunit of respiratory chain NADH dehydrogenase (Complex I) which is composed of 45 different subunits.

It localises to the mitochondrion inner membrane. The catalysed reaction is a ubiquinone + NADH + 5 H(+)(in) = a ubiquinol + NAD(+) + 4 H(+)(out). Functionally, core subunit of the mitochondrial membrane respiratory chain NADH dehydrogenase (Complex I) which catalyzes electron transfer from NADH through the respiratory chain, using ubiquinone as an electron acceptor. Part of the enzyme membrane arm which is embedded in the lipid bilayer and involved in proton translocation. This Muntiacus vuquangensis (Giant muntjac) protein is NADH-ubiquinone oxidoreductase chain 4L (MT-ND4L).